The chain runs to 72 residues: UPF0426 protein asl4034 (72 aa).

The protein belongs to the UPF0426 family.

The sequence is that of UPF0426 protein asl4034 from Nostoc sp. (strain PCC 7120 / SAG 25.82 / UTEX 2576).